Here is a 201-residue protein sequence, read N- to C-terminus: Probable molybdenum cofactor guanylyltransferase (201 aa).

GTP contacts are provided by residues 6-8, lysine 18, aspartate 65, and aspartate 97; that span reads LAG. Position 97 (aspartate 97) interacts with Mg(2+).

Belongs to the MobA family. Mg(2+) is required as a cofactor.

The protein localises to the cytoplasm. The catalysed reaction is Mo-molybdopterin + GTP + H(+) = Mo-molybdopterin guanine dinucleotide + diphosphate. Functionally, transfers a GMP moiety from GTP to Mo-molybdopterin (Mo-MPT) cofactor (Moco or molybdenum cofactor) to form Mo-molybdopterin guanine dinucleotide (Mo-MGD) cofactor. This is Probable molybdenum cofactor guanylyltransferase from Staphylococcus haemolyticus (strain JCSC1435).